The chain runs to 357 residues: Alanine racemase (357 aa).

Lys34 serves as the catalytic Proton acceptor; specific for D-alanine. N6-(pyridoxal phosphate)lysine is present on Lys34. Position 129 (Arg129) interacts with substrate. Tyr254 serves as the catalytic Proton acceptor; specific for L-alanine. Met302 serves as a coordination point for substrate.

It belongs to the alanine racemase family. Pyridoxal 5'-phosphate serves as cofactor.

The catalysed reaction is L-alanine = D-alanine. It functions in the pathway amino-acid biosynthesis; D-alanine biosynthesis; D-alanine from L-alanine: step 1/1. In terms of biological role, catalyzes the interconversion of L-alanine and D-alanine. Likely plays an important role in supplying D-alanine, which is an indispensable constituent in the biosynthesis of bacterial cell-wall peptidoglycan. This chain is Alanine racemase, found in Aeromonas hydrophila subsp. hydrophila (strain ATCC 7966 / DSM 30187 / BCRC 13018 / CCUG 14551 / JCM 1027 / KCTC 2358 / NCIMB 9240 / NCTC 8049).